The sequence spans 127 residues: UPF0102 protein Paes_0016 (127 aa).

This sequence belongs to the UPF0102 family.

This is UPF0102 protein Paes_0016 from Prosthecochloris aestuarii (strain DSM 271 / SK 413).